Reading from the N-terminus, the 372-residue chain is DNA replication and repair protein RecF (372 aa).

Residue 30–37 (GANGQGKT) participates in ATP binding.

It belongs to the RecF family.

The protein resides in the cytoplasm. Its function is as follows. The RecF protein is involved in DNA metabolism; it is required for DNA replication and normal SOS inducibility. RecF binds preferentially to single-stranded, linear DNA. It also seems to bind ATP. This chain is DNA replication and repair protein RecF, found in Heliobacterium modesticaldum (strain ATCC 51547 / Ice1).